The sequence spans 98 residues: NADH-ubiquinone oxidoreductase chain 4L (98 aa).

Transmembrane regions (helical) follow at residues 1–21, 29–49, and 58–78; these read MPII…GMLI, SLLC…LMAL, and IVPI…LALL.

The protein belongs to the complex I subunit 4L family. As to quaternary structure, core subunit of respiratory chain NADH dehydrogenase (Complex I) which is composed of 45 different subunits.

The protein localises to the mitochondrion inner membrane. The catalysed reaction is a ubiquinone + NADH + 5 H(+)(in) = a ubiquinol + NAD(+) + 4 H(+)(out). Functionally, core subunit of the mitochondrial membrane respiratory chain NADH dehydrogenase (Complex I) which catalyzes electron transfer from NADH through the respiratory chain, using ubiquinone as an electron acceptor. Part of the enzyme membrane arm which is embedded in the lipid bilayer and involved in proton translocation. The protein is NADH-ubiquinone oxidoreductase chain 4L (MT-ND4L) of Colobus guereza (Mantled guereza).